Here is a 166-residue protein sequence, read N- to C-terminus: MSSAIETKKVVVEEIASKLKESKSTIIVDYRGLNVSEVTELRKQLREANVEFKVYKNTMTRRAVEQAELNGLNDFLTGPNAIAFSTEDVVAPAKVLNDFAKNHEALEIKAGVIEGKVSTVEEVKALAELPSREGLLSMLLSVLQAPVRNLALAAKAVAEQKEEQGA.

In terms of assembly, part of the ribosomal stalk of the 50S ribosomal subunit. The N-terminus interacts with L11 and 23S rRNA to form the base of the stalk. The C-terminus forms an elongated spine to which L12 dimers bind in a sequential fashion forming a pentameric L10(L12)2(L12)2 complex.

In terms of biological role, forms part of the ribosomal stalk, playing a central role in the interaction of the ribosome with GTP-bound translation factors (such as IF-2, EF-Tu, EF-G and RF3). This chain is Large ribosomal subunit protein uL10 (rplJ), found in Bacillus subtilis (strain 168).